We begin with the raw amino-acid sequence, 123 residues long: Small ribosomal subunit protein uS11 (123 aa).

The tract at residues 1 to 22 is disordered; that stretch reads MAKKRKKKLSSPEGISHIHASA.

It belongs to the universal ribosomal protein uS11 family. In terms of assembly, part of the 30S ribosomal subunit. Interacts with proteins S7 and S18. Binds to IF-3.

Located on the platform of the 30S subunit, it bridges several disparate RNA helices of the 16S rRNA. Forms part of the Shine-Dalgarno cleft in the 70S ribosome. This chain is Small ribosomal subunit protein uS11, found in Malacoplasma penetrans (strain HF-2) (Mycoplasma penetrans).